Consider the following 520-residue polypeptide: Target of rapamycin complex 2 subunit MAPKAP1 (520 aa).

One can recognise a CRIM domain in the interval 139–267 (QSILSVRLEQ…GFSTLALVEK (129 aa)). The SIN1-type RBD stretch occupies residues 279–353 (LFVRINAAHG…QNSLEFCLVR (75 aa)). The tract at residues 310-333 (KRRKGSQRNSGPQYRLEKQSQPNV) is disordered. The region spanning 382–487 (QYKSFKVSMI…IVLKVNYILE (106 aa)) is the SIN1-type PH domain. A 1,2-diacyl-sn-glycero-3-phospho-(1D-myo-inositol-3,4,5-trisphosphate)-binding residues include arginine 393, lysine 428, and lysine 464.

This sequence belongs to the SIN1 family. As to quaternary structure, component of the mechanistic target of rapamycin complex 2 (mTORC2), consisting in two heterotretramers composed of MTOR, MLST8, RICTOR and MAPKAP1/SIN1. Contrary to mTORC1, mTORC2 does not bind to and is not sensitive to FKBP12-rapamycin.

The protein resides in the cell membrane. Its subcellular location is the endoplasmic reticulum membrane. The protein localises to the early endosome membrane. It is found in the late endosome membrane. It localises to the lysosome membrane. The protein resides in the golgi apparatus membrane. Its subcellular location is the mitochondrion outer membrane. The protein localises to the cytoplasm. It is found in the perinuclear region. It localises to the nucleus. Phosphatidylinositol 3,4,5-trisphosphate (PI(3,4,5)P3) promotes MTOR activation by relieving MAPKAP1/SIN1-mediated inhibition of MTOR that takes place in absence of PI(3,4,5)P3. Functionally, component of the mechanistic target of rapamycin complex 2 (mTORC2), which transduces signals from growth factors to pathways involved in proliferation, cytoskeletal organization, lipogenesis and anabolic output. In response to growth factors, mTORC2 phosphorylates and activates AGC protein kinase family members, including AKT (AKT1, AKT2 and AKT3), PKC (PRKCA, PRKCB and PRKCE) and SGK1. In contrast to mTORC1, mTORC2 is nutrient-insensitive. Within the mTORC2 complex, MAPKAP1/SIN1 acts as a substrate adapter which recognizes and binds AGC protein kinase family members for phosphorylation by MTOR. This chain is Target of rapamycin complex 2 subunit MAPKAP1 (mapkap1), found in Xenopus tropicalis (Western clawed frog).